The chain runs to 98 residues: NADH-ubiquinone oxidoreductase chain 4L (98 aa).

The next 3 membrane-spanning stretches (helical) occupy residues 1-21 (MPII…GMLT), 29-49 (SLLC…LMAL), and 58-78 (IVPI…LSLL).

This sequence belongs to the complex I subunit 4L family. Core subunit of respiratory chain NADH dehydrogenase (Complex I) which is composed of 45 different subunits.

The protein localises to the mitochondrion inner membrane. It catalyses the reaction a ubiquinone + NADH + 5 H(+)(in) = a ubiquinol + NAD(+) + 4 H(+)(out). Its function is as follows. Core subunit of the mitochondrial membrane respiratory chain NADH dehydrogenase (Complex I) which catalyzes electron transfer from NADH through the respiratory chain, using ubiquinone as an electron acceptor. Part of the enzyme membrane arm which is embedded in the lipid bilayer and involved in proton translocation. The polypeptide is NADH-ubiquinone oxidoreductase chain 4L (MT-ND4L) (Presbytis melalophos (Mitred leaf monkey)).